Reading from the N-terminus, the 135-residue chain is D-ribose pyranase (135 aa).

The active-site Proton donor is His-20. Substrate contacts are provided by residues Asp-28, His-102, and Tyr-124–Asn-126.

Belongs to the RbsD / FucU family. RbsD subfamily. Homodecamer.

The protein localises to the cytoplasm. It catalyses the reaction beta-D-ribopyranose = beta-D-ribofuranose. Its pathway is carbohydrate metabolism; D-ribose degradation; D-ribose 5-phosphate from beta-D-ribopyranose: step 1/2. Its function is as follows. Catalyzes the interconversion of beta-pyran and beta-furan forms of D-ribose. The polypeptide is D-ribose pyranase (Rhodopirellula baltica (strain DSM 10527 / NCIMB 13988 / SH1)).